Consider the following 323-residue polypeptide: o-succinylbenzoate synthase (323 aa).

K134 serves as the catalytic Proton donor. Residues D162, E191, and D214 each coordinate Mg(2+). K236 functions as the Proton acceptor in the catalytic mechanism.

Belongs to the mandelate racemase/muconate lactonizing enzyme family. MenC type 1 subfamily. It depends on a divalent metal cation as a cofactor.

The catalysed reaction is (1R,6R)-6-hydroxy-2-succinyl-cyclohexa-2,4-diene-1-carboxylate = 2-succinylbenzoate + H2O. Its pathway is quinol/quinone metabolism; 1,4-dihydroxy-2-naphthoate biosynthesis; 1,4-dihydroxy-2-naphthoate from chorismate: step 4/7. It participates in quinol/quinone metabolism; menaquinone biosynthesis. Functionally, converts 2-succinyl-6-hydroxy-2,4-cyclohexadiene-1-carboxylate (SHCHC) to 2-succinylbenzoate (OSB). This Yersinia enterocolitica serotype O:8 / biotype 1B (strain NCTC 13174 / 8081) protein is o-succinylbenzoate synthase.